A 305-amino-acid polypeptide reads, in one-letter code: Probable 5-dehydro-4-deoxyglucarate dehydratase (305 aa).

The protein belongs to the DapA family.

The catalysed reaction is 5-dehydro-4-deoxy-D-glucarate + H(+) = 2,5-dioxopentanoate + CO2 + H2O. It functions in the pathway carbohydrate acid metabolism; D-glucarate degradation; 2,5-dioxopentanoate from D-glucarate: step 2/2. This Xanthomonas campestris pv. campestris (strain B100) protein is Probable 5-dehydro-4-deoxyglucarate dehydratase.